Reading from the N-terminus, the 130-residue chain is Small ribosomal subunit protein uS9 (130 aa).

Belongs to the universal ribosomal protein uS9 family.

The chain is Small ribosomal subunit protein uS9 from Chromobacterium violaceum (strain ATCC 12472 / DSM 30191 / JCM 1249 / CCUG 213 / NBRC 12614 / NCIMB 9131 / NCTC 9757 / MK).